The following is a 335-amino-acid chain: DNA-directed RNA polymerase subunit alpha (335 aa).

Residues 1-233 (MMLNATEFLT…QQISIFVDLE (233 aa)) form an alpha N-terminal domain (alpha-NTD) region. An alpha C-terminal domain (alpha-CTD) region spans residues 247–335 (VDPVLLRPVD…VDDRFSYRSR (89 aa)).

This sequence belongs to the RNA polymerase alpha chain family. Homodimer. The RNAP catalytic core consists of 2 alpha, 1 beta, 1 beta' and 1 omega subunit. When a sigma factor is associated with the core the holoenzyme is formed, which can initiate transcription.

It catalyses the reaction RNA(n) + a ribonucleoside 5'-triphosphate = RNA(n+1) + diphosphate. In terms of biological role, DNA-dependent RNA polymerase catalyzes the transcription of DNA into RNA using the four ribonucleoside triphosphates as substrates. This is DNA-directed RNA polymerase subunit alpha from Psychrobacter sp. (strain PRwf-1).